The following is a 427-amino-acid chain: Polyprenol-phosphate-mannose-dependent alpha-(1-2)-phosphatidylinositol mannoside mannosyltransferase (427 aa).

The next 10 helical transmembrane spans lie at 18–38, 101–121, 143–163, 191–211, 218–238, 279–299, 308–328, 331–346, 351–371, and 386–406; these read LWCL…WRLF, ASVA…AIVL, WLAV…SSNF, LMLG…LYFL, AALT…VLAW, ERFA…IWAM, PTLA…VSWS, WVWM…LLGW, VALA…PIDL, and LAGM…GLTV.

Belongs to the glycosyltransferase 87 family.

The protein resides in the cell membrane. The protein operates within phospholipid metabolism; phosphatidylinositol metabolism. Its function is as follows. Responsible for the addition of alpha-(1-2) mannose branches to the linear mannan core on the biosynthetic pathway to mature lipoarabinomannan (LAM). This chain is Polyprenol-phosphate-mannose-dependent alpha-(1-2)-phosphatidylinositol mannoside mannosyltransferase, found in Mycobacterium tuberculosis (strain ATCC 25618 / H37Rv).